We begin with the raw amino-acid sequence, 123 residues long: MALLKISVVVPEGEVYTGEVRSVVLPGVEGEFGVLYGHSNMITLLQAGVIEIETESQKEHIAISWGYAEVTGEHVDILADGAVFIKKESDDRDDAISRAKRLLEDASSDRLAVSSVLAKIESL.

It belongs to the ATPase epsilon chain family. F-type ATPases have 2 components, CF(1) - the catalytic core - and CF(0) - the membrane proton channel. CF(1) has five subunits: alpha(3), beta(3), gamma(1), delta(1), epsilon(1). CF(0) has three main subunits: a, b and c.

The protein resides in the cell inner membrane. In terms of biological role, produces ATP from ADP in the presence of a proton gradient across the membrane. The chain is ATP synthase epsilon chain from Helicobacter acinonychis (strain Sheeba).